The sequence spans 634 residues: 1-deoxy-D-xylulose-5-phosphate synthase (634 aa).

Residues H74 and 115–117 (AHS) contribute to the thiamine diphosphate site. Residue D146 participates in Mg(2+) binding. Residues 147–148 (GA), N176, Y283, and E365 each bind thiamine diphosphate. Residue N176 coordinates Mg(2+).

It belongs to the transketolase family. DXPS subfamily. As to quaternary structure, homodimer. Mg(2+) serves as cofactor. It depends on thiamine diphosphate as a cofactor.

It catalyses the reaction D-glyceraldehyde 3-phosphate + pyruvate + H(+) = 1-deoxy-D-xylulose 5-phosphate + CO2. The protein operates within metabolic intermediate biosynthesis; 1-deoxy-D-xylulose 5-phosphate biosynthesis; 1-deoxy-D-xylulose 5-phosphate from D-glyceraldehyde 3-phosphate and pyruvate: step 1/1. Functionally, catalyzes the acyloin condensation reaction between C atoms 2 and 3 of pyruvate and glyceraldehyde 3-phosphate to yield 1-deoxy-D-xylulose-5-phosphate (DXP). The protein is 1-deoxy-D-xylulose-5-phosphate synthase of Burkholderia lata (strain ATCC 17760 / DSM 23089 / LMG 22485 / NCIMB 9086 / R18194 / 383).